We begin with the raw amino-acid sequence, 343 residues long: MAKRQLNRRQNWRIEKIQGERAARAAKRESATLETLEGGDLGPEQTGLVIAHFGVQVEVEAQEGEASGQVFRCHLRANLPALVTGDRVVWRAGNQGIGVIVAQLPRTTELRRPDSRGQLKPVAANVDLIVIVFAPMPEPHANLIDRYLVAAEHAGIRPLLLLNKADLIDEQNAPALNALLAVYRTLGYPVLEVSAHHGDGMQTLQSQLDGHISVFVGQSGVGKSSLVNSLLPETDTRVGPLSEVSGQGTHTTTTARLFHFPRGGDLIDSPGIREFGLGHVSRADVEAGFIEFNDLIGTCRFRDCKHDREPGCALLKGLEDGRVQQQRMNSYRSIIASLPQDSY.

Positions 116–275 (RGQLKPVAAN…LIDSPGIREF (160 aa)) constitute a CP-type G domain. Residues 163-166 (NKAD) and 217-225 (GQSGVGKSS) contribute to the GTP site. The Zn(2+) site is built by C299, C304, H306, and C312.

Belongs to the TRAFAC class YlqF/YawG GTPase family. RsgA subfamily. Monomer. Associates with 30S ribosomal subunit, binds 16S rRNA. Zn(2+) is required as a cofactor.

Its subcellular location is the cytoplasm. One of several proteins that assist in the late maturation steps of the functional core of the 30S ribosomal subunit. Helps release RbfA from mature subunits. May play a role in the assembly of ribosomal proteins into the subunit. Circularly permuted GTPase that catalyzes slow GTP hydrolysis, GTPase activity is stimulated by the 30S ribosomal subunit. The sequence is that of Small ribosomal subunit biogenesis GTPase RsgA from Pseudomonas savastanoi pv. phaseolicola (strain 1448A / Race 6) (Pseudomonas syringae pv. phaseolicola (strain 1448A / Race 6)).